The following is an 86-amino-acid chain: Large ribosomal subunit protein bL31B (86 aa).

This sequence belongs to the bacterial ribosomal protein bL31 family. Type B subfamily. As to quaternary structure, part of the 50S ribosomal subunit.

The sequence is that of Large ribosomal subunit protein bL31B from Cupriavidus taiwanensis (strain DSM 17343 / BCRC 17206 / CCUG 44338 / CIP 107171 / LMG 19424 / R1) (Ralstonia taiwanensis (strain LMG 19424)).